We begin with the raw amino-acid sequence, 410 residues long: Lissencephaly-1 homolog (410 aa).

A LisH domain is found at 7 to 39 (QRDELNRAIADYLRSNGYEEAYSVFKKEAELDM). Residues 56–82 (TSVIRLQKKVMELESKLNEAKEEFTSG) adopt a coiled-coil conformation. WD repeat units lie at residues 106 to 147 (GHRS…RTLK), 148 to 187 (GHTD…CIRT), 190 to 229 (GHDH…CVKT), 232 to 271 (GHRE…CKAE), 274 to 333 (EHEH…CLMT), 336 to 377 (GHDN…KTLN), and 379 to 410 (HEHF…WECR).

Belongs to the WD repeat LIS1/nudF family. As to quaternary structure, can self-associate. Component of the cytosolic PAF-AH (I) heterotetrameric enzyme, which is composed of PAFAH1B1 (beta), PAFAH1B2 (alpha2) and PAFAH1B3 (alpha1) subunits. The catalytic activity of the enzyme resides in the alpha1 (PAFAH1B3) and alpha2 (PAFAH1B2) subunits, whereas the beta subunit (PAFAH1B1) has regulatory activity. Trimer formation is not essential for the catalytic activity. Interacts with dynein, dynactin, nde1 and ndel1.

It localises to the cytoplasm. It is found in the cytoskeleton. Its subcellular location is the microtubule organizing center. The protein localises to the centrosome. Its function is as follows. Regulatory subunit (beta subunit) of the cytosolic type I platelet-activating factor (PAF) acetylhydrolase (PAF-AH (I)), an enzyme that catalyzes the hydrolyze of the acetyl group at the sn-2 position of PAF and its analogs and participates in the PAF inactivation. Positively regulates the activity of the minus-end directed microtubule motor protein dynein. May enhance dynein-mediated microtubule sliding by targeting dynein to the microtubule plus end. Required for several dynein- and microtubule-dependent processes such as the maintenance of Golgi integrity, the peripheral transport of microtubule fragments and the coupling of the nucleus and centrosome. May be required for proliferation of neuronal precursors and neuronal migration. The protein is Lissencephaly-1 homolog (pafah1b1) of Xenopus tropicalis (Western clawed frog).